Reading from the N-terminus, the 249-residue chain is uncharacterized protein (249 aa).

2 helical membrane passes run 49-69 (ILLS…CYLL) and 223-243 (IVMS…VHHL).

It is found in the cell membrane. This is an uncharacterized protein from Bacillus anthracis.